We begin with the raw amino-acid sequence, 529 residues long: VIN3-like protein 3 (529 aa).

The Nuclear localization signal signature appears at 97 to 104; sequence PKRQKRDL. The PHD-type zinc finger occupies 137-207; that stretch reads RCSCCICFKY…CFNCVSCGKT (71 aa). The short motif at 214–221 is the Nuclear localization signal element; the sequence is LKKQLIIA. The Fibronectin type-III domain occupies 312–411; it reads GSMKIRIESV…FIVSTKTLQD (100 aa). Positions 421 to 529 are VIN3-Interacting Domain (VID); the sequence is MSNCNNANKM…AGVSLILLQD (109 aa).

In terms of assembly, interacts with VIN3.

The protein localises to the nucleus. Functionally, involved in both the vernalization and photoperiod pathways by regulating gene expression. This is VIN3-like protein 3 (VIL3) from Arabidopsis thaliana (Mouse-ear cress).